The chain runs to 134 residues: Profilin-3 (134 aa).

A disulfide bridge connects residues Cys-13 and Cys-118. The Involved in PIP2 interaction motif lies at 84–100; the sequence is AVIRGKKGSGGITSKKT. Thr-114 is subject to Phosphothreonine.

Belongs to the profilin family. As to quaternary structure, occurs in many kinds of cells as a complex with monomeric actin in a 1:1 ratio. Post-translationally, phosphorylated by MAP kinases.

It is found in the cytoplasm. The protein resides in the cytoskeleton. Functionally, binds to actin and affects the structure of the cytoskeleton. At high concentrations, profilin prevents the polymerization of actin, whereas it enhances it at low concentrations. The polypeptide is Profilin-3 (Olea europaea (Common olive)).